The sequence spans 178 residues: Translation initiation factor IF-3 (178 aa).

The tract at residues 1–20 (MRRPFKTDAPVKDGPRSNRE) is disordered.

The protein belongs to the IF-3 family. In terms of assembly, monomer.

Its subcellular location is the cytoplasm. Its function is as follows. IF-3 binds to the 30S ribosomal subunit and shifts the equilibrium between 70S ribosomes and their 50S and 30S subunits in favor of the free subunits, thus enhancing the availability of 30S subunits on which protein synthesis initiation begins. The chain is Translation initiation factor IF-3 from Rhizobium leguminosarum bv. trifolii (strain WSM2304).